The primary structure comprises 283 residues: Orotidine 5'-phosphate decarboxylase (283 aa).

Catalysis depends on Lys-97, which acts as the Proton donor.

Belongs to the OMP decarboxylase family. Type 2 subfamily.

It carries out the reaction orotidine 5'-phosphate + H(+) = UMP + CO2. The protein operates within pyrimidine metabolism; UMP biosynthesis via de novo pathway; UMP from orotate: step 2/2. The sequence is that of Orotidine 5'-phosphate decarboxylase from Clostridium botulinum (strain Kyoto / Type A2).